An 89-amino-acid chain; its full sequence is Small ribosomal subunit protein uS19 (89 aa).

It belongs to the universal ribosomal protein uS19 family.

In terms of biological role, protein S19 forms a complex with S13 that binds strongly to the 16S ribosomal RNA. The sequence is that of Small ribosomal subunit protein uS19 from Brachyspira hyodysenteriae (strain ATCC 49526 / WA1).